We begin with the raw amino-acid sequence, 320 residues long: Beta-carotene ketolase (320 aa).

The catalysed reaction is all-trans-beta-carotene + 2 AH2 + 2 O2 = echinenone + 2 A + 3 H2O. It catalyses the reaction echinenone + 2 AH2 + 2 O2 = canthaxanthin + 2 A + 3 H2O. Its pathway is carotenoid biosynthesis; astaxanthin biosynthesis. In terms of biological role, converts beta-carotene to canthaxanthin via echinenone. This Haematococcus lacustris (Green alga) protein is Beta-carotene ketolase.